Reading from the N-terminus, the 197-residue chain is Pyridoxal 5'-phosphate synthase subunit PdxT (197 aa).

53–55 contributes to the L-glutamine binding site; that stretch reads GES. Cys-85 functions as the Nucleophile in the catalytic mechanism. Residues Arg-114 and 142 to 143 contribute to the L-glutamine site; that span reads IR. Active-site charge relay system residues include His-179 and Glu-181.

Belongs to the glutaminase PdxT/SNO family. In the presence of PdxS, forms a dodecamer of heterodimers. Only shows activity in the heterodimer.

It catalyses the reaction aldehydo-D-ribose 5-phosphate + D-glyceraldehyde 3-phosphate + L-glutamine = pyridoxal 5'-phosphate + L-glutamate + phosphate + 3 H2O + H(+). The enzyme catalyses L-glutamine + H2O = L-glutamate + NH4(+). The protein operates within cofactor biosynthesis; pyridoxal 5'-phosphate biosynthesis. Functionally, catalyzes the hydrolysis of glutamine to glutamate and ammonia as part of the biosynthesis of pyridoxal 5'-phosphate. The resulting ammonia molecule is channeled to the active site of PdxS. The chain is Pyridoxal 5'-phosphate synthase subunit PdxT from Thermococcus kodakarensis (strain ATCC BAA-918 / JCM 12380 / KOD1) (Pyrococcus kodakaraensis (strain KOD1)).